A 164-amino-acid polypeptide reads, in one-letter code: Choriogonadotropin subunit beta (164 aa).

The N-terminal stretch at 1-20 is a signal peptide; that stretch reads MEMLQGLLLCLLLSTGGAWA. 6 disulfide bridges follow: Cys-29–Cys-77, Cys-43–Cys-92, Cys-46–Cys-130, Cys-54–Cys-108, Cys-58–Cys-110, and Cys-113–Cys-120. N-linked (GlcNAc...) asparagine glycosylation occurs at Asn-50. The segment at 133-164 is disordered; it reads HTSQDSSSKDPPRNLTSPSQLPEPADAPLVPQ. O-linked (GalNAc...) serine glycosylation is present at Ser-140. A glycan (N-linked (GlcNAc...) asparagine) is linked at Asn-146. Ser-151 carries an O-linked (GalNAc...) serine glycan.

Belongs to the glycoprotein hormones subunit beta family. Heterodimer of a common alpha chain and a unique beta chain which confers biological specificity to thyrotropin, lutropin, follitropin and gonadotropin.

The protein resides in the secreted. Its function is as follows. Stimulates the ovaries to synthesize the steroids that are essential for the maintenance of pregnancy. The sequence is that of Choriogonadotropin subunit beta (CGB) from Aotus nancymaae (Ma's night monkey).